The primary structure comprises 149 residues: MMAFEQIPKKDWYSILGADPSASVSDLKQKYQKLILMYHPDKQSADAPAGSVEECIQKFIEIDQAWKILGNEETKKEYDLQRHEDDLRNMGPVDARIYLEEMSWNEDDHSFSLSCRCGGKYSVSKDEAEEVTLISCDTCSLIIELLHYC.

Residues 11–82 (DWYSILGADP…ETKKEYDLQR (72 aa)) form the J domain. Residues 93–148 (VDARIYLEEMSWNEDDHSFSLSCRCGGKYSVSKDEAEEVTLISCDTCSLIIELLHY) enclose the DPH-type MB domain. Residues Cys-115, Cys-117, Cys-136, and Cys-139 each coordinate Zn(2+).

Belongs to the DPH4 family. In terms of assembly, monomer and homooligomer. Iron binding promotes oligomerization.

The protein localises to the cytoplasm. Its subcellular location is the cytoskeleton. It functions in the pathway protein modification; peptidyl-diphthamide biosynthesis. Its function is as follows. Stimulates the ATPase activity of several Hsp70-type chaperones. This ability is enhanced by iron-binding. The iron-bound form is redox-active and can function as electron carrier. Plays a role in the diphthamide biosynthesis, a post-translational modification of histidine which occurs in translation elongation factor 2 (EEF2). The chain is DnaJ homolog subfamily C member 24 (DNAJC24) from Bos taurus (Bovine).